A 72-amino-acid polypeptide reads, in one-letter code: Translation initiation factor IF-1 (72 aa).

An S1-like domain is found at 1–72 (MAKDDVIEVE…TRGRITYRYK (72 aa)). Residue Y60 is modified to Phosphotyrosine.

Belongs to the IF-1 family. As to quaternary structure, component of the 30S ribosomal translation pre-initiation complex which assembles on the 30S ribosome in the order IF-2 and IF-3, IF-1 and N-formylmethionyl-tRNA(fMet); mRNA recruitment can occur at any time during PIC assembly.

It localises to the cytoplasm. In terms of biological role, one of the essential components for the initiation of protein synthesis. Stabilizes the binding of IF-2 and IF-3 on the 30S subunit to which N-formylmethionyl-tRNA(fMet) subsequently binds. Helps modulate mRNA selection, yielding the 30S pre-initiation complex (PIC). Upon addition of the 50S ribosomal subunit IF-1, IF-2 and IF-3 are released leaving the mature 70S translation initiation complex. The protein is Translation initiation factor IF-1 of Bacillus pumilus (strain SAFR-032).